The sequence spans 522 residues: Peptide chain release factor 3 (522 aa).

Residues 9–276 (KKRRTFAIIS…SFVNLAPAPQ (268 aa)) form the tr-type G domain. GTP contacts are provided by residues 18–25 (SHPDAGKT), 86–90 (DTPGH), and 140–143 (NKLD).

Belongs to the TRAFAC class translation factor GTPase superfamily. Classic translation factor GTPase family. PrfC subfamily.

It is found in the cytoplasm. Functionally, increases the formation of ribosomal termination complexes and stimulates activities of RF-1 and RF-2. It binds guanine nucleotides and has strong preference for UGA stop codons. It may interact directly with the ribosome. The stimulation of RF-1 and RF-2 is significantly reduced by GTP and GDP, but not by GMP. This is Peptide chain release factor 3 from Lactobacillus gasseri (strain ATCC 33323 / DSM 20243 / BCRC 14619 / CIP 102991 / JCM 1131 / KCTC 3163 / NCIMB 11718 / NCTC 13722 / AM63).